The chain runs to 205 residues: Peptidyl-tRNA hydrolase (205 aa).

Tyrosine 14 is a tRNA binding site. Histidine 19 (proton acceptor) is an active-site residue. The tRNA site is built by tyrosine 68, asparagine 70, and asparagine 116.

Belongs to the PTH family. Monomer.

The protein localises to the cytoplasm. The catalysed reaction is an N-acyl-L-alpha-aminoacyl-tRNA + H2O = an N-acyl-L-amino acid + a tRNA + H(+). Functionally, hydrolyzes ribosome-free peptidyl-tRNAs (with 1 or more amino acids incorporated), which drop off the ribosome during protein synthesis, or as a result of ribosome stalling. In terms of biological role, catalyzes the release of premature peptidyl moieties from peptidyl-tRNA molecules trapped in stalled 50S ribosomal subunits, and thus maintains levels of free tRNAs and 50S ribosomes. The polypeptide is Peptidyl-tRNA hydrolase (Caulobacter vibrioides (strain ATCC 19089 / CIP 103742 / CB 15) (Caulobacter crescentus)).